The chain runs to 418 residues: Tyrosine--tRNA ligase (418 aa).

Tyrosine 34 is a binding site for L-tyrosine. Positions 39–48 (PTADSLHLGH) match the 'HIGH' region motif. 2 residues coordinate L-tyrosine: tyrosine 169 and glutamine 173. Positions 229 to 233 (KFGKS) match the 'KMSKS' region motif. Lysine 232 lines the ATP pocket. Residues 352 to 418 (LNIVEILVSS…GKKKYAVLTY (67 aa)) enclose the S4 RNA-binding domain.

This sequence belongs to the class-I aminoacyl-tRNA synthetase family. TyrS type 1 subfamily. As to quaternary structure, homodimer.

It localises to the cytoplasm. The catalysed reaction is tRNA(Tyr) + L-tyrosine + ATP = L-tyrosyl-tRNA(Tyr) + AMP + diphosphate + H(+). Its function is as follows. Catalyzes the attachment of tyrosine to tRNA(Tyr) in a two-step reaction: tyrosine is first activated by ATP to form Tyr-AMP and then transferred to the acceptor end of tRNA(Tyr). The chain is Tyrosine--tRNA ligase from Streptococcus uberis (strain ATCC BAA-854 / 0140J).